The following is an 856-amino-acid chain: MNGATATATAAVGAEEEGGAREGSRRRDSVESAGDGRRRTKVSRACDQCRRKKIKCEYQEDAQSCSGCRKNSERCAFERVPLKRGPSKGYTRGEGAGDGARETEGARGELDTSRADGKAAPVSLPPLHYYLPISNGQPGGAPAQAPAAPFPPMKQQFWKVPYYENQMQRRSSLESVNSDASGPQSQQETYAASSASTSSHQRTSRSYFPSSDGASALFQEPCSSSYPPPLVRSSSTGGQLQQLPAPQYPYSQFAVALSGSTSASSQSVQLRTSATGSTSLPEDSSPSSSNAYSPQLRAHCMSESLTTPTAGSKTGGSVKRRKRLSEPADPIVPLSAREPRQAGHIGLPLQAQQATGKTGVICGKLSDAELIDAYYEYVHVNYPIIPINKETLTNEILLVNTQPISEVHEMNNYILYWFRVALELLLHVASDKTNQDTASGMDSNAVHDGGLYAHRGDFKQNEEHHVPHQSQLLAALNDCFRKLLDIHPKICAYQESTSPKVTTIYLSTYIIINYMLAMLGEDNTFVLGTSVTVFNEFKIYRLLVLHEVADEPGDDSADVERHGFELLYKRLYYSLLVFDALQSCCFGAPRLASLPISHLVEPLFAPPPPLDSAKWAVESDAARREPLLASIRLGALLTELCETRVLAGALPRAPTPALRAPRPFRVAPPADDSVPGAFFHALAAQRALLDRLLAIPAHPAFAADAPPDATVDLCAQLGDAICRFTSCVLDTLVRAGPRPASPFAAALSRALHHAINLSRNIPTSLIGCIIGTAVHHSRDRDLIVALSRCMSDMIQIQGLTHCLRPCAPPRPRARVSCDLRRLYGHDGPPASPHQVMLHQFIDIAWRLLRNDELGWF.

Over residues Met-1–Gly-13 the composition is skewed to low complexity. The disordered stretch occupies residues Met-1–Val-42. Over residues Gly-18 to Arg-37 the composition is skewed to basic and acidic residues. The segment at residues Cys-46 to Cys-75 is a DNA-binding region (zn(2)-C6 fungal-type). Disordered stretches follow at residues Lys-83–Pro-121, Gln-168–Pro-244, and Thr-261–Pro-330. The span at Gly-99–Gly-117 shows a compositional bias: basic and acidic residues. Residues Gln-168–Pro-183 are compositionally biased toward polar residues. Composition is skewed to low complexity over residues Gln-184–Tyr-207, Thr-261–Leu-270, and Ser-277–Pro-294. Positions Glu-303–Ser-312 are enriched in polar residues.

Belongs to the EDS1/RGT1 family.

The protein localises to the nucleus. It is found in the cytoplasm. Its function is as follows. Glucose-responsive transcription factor that regulates expression of several glucose transporter (HXT) genes in response to glucose. In the absence of glucose, it functions as a transcriptional repressor, whereas high concentrations of glucose cause it to function as a transcriptional activator. In cells growing on low levels of glucose, has a neutral role, neither repressing nor activating transcription. The sequence is that of Glucose transport transcription regulator RGT1 (RGT1) from Eremothecium gossypii (strain ATCC 10895 / CBS 109.51 / FGSC 9923 / NRRL Y-1056) (Yeast).